Here is a 74-residue protein sequence, read N- to C-terminus: Kappa-scoloptoxin(07)-Ssm2e (74 aa).

The N-terminal stretch at 1-19 (MLVFYALLFVSVFSNTVMG) is a signal peptide. Residues 20-41 (ATIDMPIPKPILREAIEEIDVN) constitute a propeptide that is removed on maturation.

The protein belongs to the scoloptoxin-07 family. Post-translationally, contains 3 disulfide bonds. In terms of tissue distribution, expressed by the venom gland.

Its subcellular location is the secreted. Its function is as follows. Inhibits voltage-gated potassium channels. This Scolopendra mutilans (Chinese red-headed centipede) protein is Kappa-scoloptoxin(07)-Ssm2e.